The following is a 116-amino-acid chain: Somatostatin (116 aa).

The N-terminal stretch at 1–24 (MLSCRLQCALAALCIVLALGGVTG) is a signal peptide. The propeptide occupies 35–88 (LQKSLAAATGKQELAKYFLAELLSEPNQTENDALEPEDLPQAAEQDEMRLELQR). Threonine amide is present on Thr-43. The cysteines at positions 105 and 116 are disulfide-linked.

This sequence belongs to the somatostatin family. C-terminal amidation of the neuronostatin peptide is required for its biological activity, including for the regulation of mean arterial pressure. In the pancreas, somatostatin is expressed in delta cells of the islets of Langerhans. In the stomach, it is expressed in parietal cells of oxyntic mucosa and in the small intestine, it is found in the villus (at protein level). Neuronostatin is expressed in the pancreas in delta cells of the islets of Langerhans, as well as in the stomach, in parietal cells of oxyntic mucosa and in the small intestine, in the villus (at protein level).

It is found in the secreted. In terms of biological role, inhibits the secretion of pituitary hormones, including that of growth hormone/somatotropin (GH1), PRL, ACTH, luteinizing hormone (LH) and TSH. Also impairs ghrelin- and GnRH-stimulated secretion of GH1 and LH; the inhibition of ghrelin-stimulated secretion of GH1 can be further increased by neuronostatin. Functionally, may enhance low-glucose-induced glucagon release by pancreatic alpha cells. This effect may be mediated by binding to GPR107 and PKA activation. May regulate cardiac contractile function. May compromise cardiomyocyte viability. In the central nervous system, may impair memory retention and may affect hippocampal excitability. May also have anxiolytic and anorexigenic effects. May play a role in arterial pressure regulation. May inhibit basal, but not ghrelin- or GnRH-stimulated secretion of GH1 or LH, but does not affect the release of other pituitary hormones, including PRL, ACTH, FSH or TSH. Potentiates inhibitory action of somatostatin on ghrelin-stimulated secretion of GH1, but not that on GnRH-stimulated secretion of LH. The protein is Somatostatin (Sst) of Mus musculus (Mouse).